A 223-amino-acid polypeptide reads, in one-letter code: MAGNKGRGRAAYTFNIEAVGFSKGEKLPDVVLKPPPLFPDTDYKPVPLKTGEGEEYMLALKQELRETMKRMPYFIETPEERQDIERYSKRYMKVYKEEWIPDWRRLPREMMPRNKCKKAGPKPKKAKDAGKGTPLTNTEDVLKKMEELEKRGDGEKSDEENEEKEGSKEKSKEGDDDDDDDAAEQEEYDEEEQEEENDYINSYFEDGDDFGADSDDNMDEATY.

Residues Met110–Tyr223 are disordered. Residues Asn114 to Lys125 show a composition bias toward basic residues. Position 133 is a phosphothreonine (Thr133). Residues Asp140–Glu155 are compositionally biased toward basic and acidic residues. Ser157 carries the post-translational modification Phosphoserine. The segment covering Lys164 to Glu173 has biased composition (basic and acidic residues). Acidic residues-rich tracts occupy residues Gly174–Asp198 and Glu205–Tyr223.

Belongs to the eukaryotic RPC7 RNA polymerase subunit family. In terms of assembly, component of the RNA polymerase III complex consisting of 17 subunits: a ten-subunit horseshoe-shaped catalytic core composed of POLR3A/RPC1, POLR3B/RPC2, POLR1C/RPAC1, POLR1D/RPAC2, POLR3K/RPC10, POLR2E/RPABC1, POLR2F/RPABC2, POLR2H/RPABC3, POLR2K/RPABC4 and POLR2L/RPABC5; a mobile stalk composed of two subunits POLR3H/RPC8 and CRCP/RPC9, protruding from the core and functioning primarily in transcription initiation; and additional subunits homologous to general transcription factors of the RNA polymerase II machinery, POLR3C/RPC3-POLR3F/RPC6-POLR3G/RPC7 heterotrimer required for transcription initiation and POLR3D/RPC4-POLR3E/RPC5 heterodimer involved in both transcription initiation and termination. Directly interacts with POLR3C/RPC62. Also found in a trimeric complex with POLR3C/RPC3 and POLR3GL. As to expression, barely detectable in differentiated tissues. Expressed in embryonic stem cells and in other dividing cells, such as some tumor cell lines.

The protein resides in the nucleus. It is found in the cytoplasm. DNA-dependent RNA polymerase catalyzes the transcription of DNA into RNA using the four ribonucleoside triphosphates as substrates. Specific peripheric component of RNA polymerase III (Pol III) which synthesizes small non-coding RNAs including 5S rRNA, snRNAs, tRNAs and miRNAs from at least 500 distinct genomic loci. Acts as a long tether that bridges POLR3C/RPC3-POLR3F/RPC6-POLR3G/RPC7 heterotrimer and the mobile stalk of Pol III, coordinating the dynamics of Pol III stalk and clamp modules during the transition from apo to elongation state. Pol III exists as two alternative complexes defined by the mutually exclusive incorporation of subunit POLR3G/RPC7alpha or POLR3GL/RPC7beta. POLR3G/RPC7alpha modulates Pol III transcriptome by specifically enhancing the transcription of snaR-A non-coding RNAs. At resting state, occupies the active site of apo Pol III and keeps Pol III in an autoinhibitory mode, preventing non-specific transcription. Pol III plays a key role in sensing and limiting infection by intracellular bacteria and DNA viruses. Acts as a nuclear and cytosolic DNA sensor involved in innate immune response. Can sense non-self dsDNA that serves as template for transcription into dsRNA. The non-self RNA polymerase III transcripts, such as Epstein-Barr virus-encoded RNAs (EBERs), induce type I interferon and NF-kappa-B through the RIG-I pathway. The polypeptide is DNA-directed RNA polymerase III subunit RPC7 (Homo sapiens (Human)).